We begin with the raw amino-acid sequence, 333 residues long: Cytochrome f (333 aa).

Positions 1-16 (MRNVFRTARLTRSARA) are cleaved as a signal peptide. A helical transmembrane segment spans residues 17-36 (IVKTLLIAIATVTFYFTSDL). Positions 45, 66, 69, and 70 each coordinate heme. The chain crosses the membrane as a helical span at residues 299–319 (VKWMIAFVALVMLAQVMLVLK).

Belongs to the cytochrome f family. The 4 large subunits of the cytochrome b6-f complex are cytochrome b6, subunit IV (17 kDa polypeptide, PetD), cytochrome f and the Rieske protein, while the 4 small subunits are PetG, PetL, PetM and PetN. The complex functions as a dimer. The cofactor is heme.

The protein localises to the cellular thylakoid membrane. Functionally, component of the cytochrome b6-f complex, which mediates electron transfer between photosystem II (PSII) and photosystem I (PSI), cyclic electron flow around PSI, and state transitions. This is Cytochrome f from Nostoc punctiforme (strain ATCC 29133 / PCC 73102).